We begin with the raw amino-acid sequence, 98 residues long: Co-chaperonin GroES (98 aa).

The disordered stretch occupies residues 35–57 (EKPQEGKVISAGPGRVDDKGTRV).

It belongs to the GroES chaperonin family. As to quaternary structure, heptamer of 7 subunits arranged in a ring. Interacts with the chaperonin GroEL.

The protein localises to the cytoplasm. In terms of biological role, together with the chaperonin GroEL, plays an essential role in assisting protein folding. The GroEL-GroES system forms a nano-cage that allows encapsulation of the non-native substrate proteins and provides a physical environment optimized to promote and accelerate protein folding. GroES binds to the apical surface of the GroEL ring, thereby capping the opening of the GroEL channel. The polypeptide is Co-chaperonin GroES (Cutibacterium acnes (strain DSM 16379 / KPA171202) (Propionibacterium acnes)).